A 613-amino-acid chain; its full sequence is Portal protein (613 aa).

The segment at 577 to 613 (ATGGDHGIRQAPSARGDAEPDHAKSKPARDPPPGAGS) is disordered. A compositionally biased stretch (basic and acidic residues) spans 592-605 (GDAEPDHAKSKPAR).

Belongs to the herpesviridae portal protein family. As to quaternary structure, homododecamerizes. Interacts with terminase subunits TRM1 and TRM3.

Its subcellular location is the virion. The protein resides in the host nucleus. Functionally, forms a portal in the viral capsid through which viral DNA is translocated during DNA packaging. Assembles as a dodecamer at a single fivefold axe of the T=16 icosahedric capsid. Binds to the molecular motor that translocates the viral DNA, termed terminase. The protein is Portal protein of Homo sapiens (Human).